A 235-amino-acid polypeptide reads, in one-letter code: Phosphoribosylaminoimidazole-succinocarboxamide synthase (235 aa).

The protein belongs to the SAICAR synthetase family.

The catalysed reaction is 5-amino-1-(5-phospho-D-ribosyl)imidazole-4-carboxylate + L-aspartate + ATP = (2S)-2-[5-amino-1-(5-phospho-beta-D-ribosyl)imidazole-4-carboxamido]succinate + ADP + phosphate + 2 H(+). It functions in the pathway purine metabolism; IMP biosynthesis via de novo pathway; 5-amino-1-(5-phospho-D-ribosyl)imidazole-4-carboxamide from 5-amino-1-(5-phospho-D-ribosyl)imidazole-4-carboxylate: step 1/2. In Streptococcus pneumoniae serotype 19F (strain G54), this protein is Phosphoribosylaminoimidazole-succinocarboxamide synthase.